Reading from the N-terminus, the 553-residue chain is HTH-type transcriptional regulator SgrR (553 aa).

The region spanning 1 to 113 is the HTH marR-type domain; it reads MSTSRLQQQF…RQMLLSQLGR (113 aa). The segment at residues 26-49 is a DNA-binding region (H-T-H motif); it reads LQALAEVLNCSRRHVRSLLGKMQH. Residues 163-494 are solute-binding; the sequence is ELEPDLSHHW…EELHQDIESW (332 aa).

Its function is as follows. Activates the small RNA gene sgrS under glucose-phosphate stress conditions as well as yfdZ. Represses its own transcription under both stress and non-stress conditions. Might act as a sensor of the intracellular accumulation of phosphoglucose by binding these molecules in its C-terminal solute-binding domain. This chain is HTH-type transcriptional regulator SgrR, found in Yersinia pseudotuberculosis serotype I (strain IP32953).